Reading from the N-terminus, the 157-residue chain is Peptide methionine sulfoxide reductase MsrA (157 aa).

Residue Cys-10 is part of the active site.

Belongs to the MsrA Met sulfoxide reductase family.

The enzyme catalyses L-methionyl-[protein] + [thioredoxin]-disulfide + H2O = L-methionyl-(S)-S-oxide-[protein] + [thioredoxin]-dithiol. The catalysed reaction is [thioredoxin]-disulfide + L-methionine + H2O = L-methionine (S)-S-oxide + [thioredoxin]-dithiol. Has an important function as a repair enzyme for proteins that have been inactivated by oxidation. Catalyzes the reversible oxidation-reduction of methionine sulfoxide in proteins to methionine. The chain is Peptide methionine sulfoxide reductase MsrA from Clostridium botulinum (strain Hall / ATCC 3502 / NCTC 13319 / Type A).